Reading from the N-terminus, the 235-residue chain is uncharacterized protein (235 aa).

The segment at 1–98 (MDTKLSVTGA…NKKNTLHYSK (98 aa)) is disordered. Glycyl lysine isopeptide (Lys-Gly) (interchain with G-Cter in ubiquitin) cross-links involve residues Lys-16 and Lys-35. Positions 38 to 50 (NGNKKRNKNRNRN) are enriched in basic residues. Residues 51 to 60 (KKTETKEQNE) show a composition bias toward basic and acidic residues.

This is an uncharacterized protein from Saccharomyces cerevisiae (strain ATCC 204508 / S288c) (Baker's yeast).